The sequence spans 166 residues: Ribonuclease H (166 aa).

The RNase H type-1 domain maps to 5–147 (PRKRVALFTD…VDREARRQAQ (143 aa)). Residues aspartate 14, glutamate 52, aspartate 74, and aspartate 139 each coordinate Mg(2+). The interval 128 to 166 (GHTGHPENERVDREARRQAQSQAKTPCPPQAPTLFHEEA) is disordered. Over residues 131–144 (GHPENERVDREARR) the composition is skewed to basic and acidic residues.

The protein belongs to the RNase H family. As to quaternary structure, monomer. The cofactor is Mg(2+).

The protein localises to the cytoplasm. It catalyses the reaction Endonucleolytic cleavage to 5'-phosphomonoester.. Its function is as follows. Endonuclease that specifically degrades the RNA of RNA-DNA hybrids. The polypeptide is Ribonuclease H (Thermus thermophilus (strain ATCC BAA-163 / DSM 7039 / HB27)).